A 295-amino-acid chain; its full sequence is MKFGKSLSSQIVETLPEWRDKFLSYKDLKKRLKLIGGGGGGEERQAKRARVAADGGEEEAAAAAMTPEEAGFMRLLEAELDKFNSFFVEKEEEYIIRQKELQDRVARAAGRESKEELMRVRKEIVDFHGEMVLLENYSALNYTGLVKILKKYDKRTGALIRLPFIQKVLQQPFFTTDLLYKLVKQCEAMLDQLLPSNELPVSSEDGRGDSTNEDKPSNPSSSLVNGGTIPELDEIEYMESMYMKGTVAALRSLKEIRSGSSTVSAFSLPPLQGDSSPEEQQELWNKIPVIEQAAK.

The 166-residue stretch at 1-166 (MKFGKSLSSQ…GALIRLPFIQ (166 aa)) folds into the SPX domain. The segment at 197–227 (NELPVSSEDGRGDSTNEDKPSNPSSSLVNGG) is disordered. A compositionally biased stretch (basic and acidic residues) spans 204–216 (EDGRGDSTNEDKP).

Interacts (via SPX domain) with PHR2 (via C-terminus). Interacts with RLI1 in the nucleus to prevents its positive regulation of leaf inclination during phosphate (Pi) starvation.

Its subcellular location is the nucleus. Involved in plant adaptation to phosphate (Pi) starvation. Inhibits PHR2 DNA-binding activity via a Pi-dependent protein interaction. Suppresses the regulation on expression of PT2 by PHR2 and accumulation of shoot Pi. Optimizes growth under phosphate-limited conditions through a negative feedback loop of the PSI (phosphate starvation-induced) signaling pathway. Regulates the expression of SPX2, SPX3 and SPX5. May be an important link between signal transduction pathways related to phosphate starvation and cold stress. Together with SPX2, plays a negative role in the regulation of leaf inclination by preventing RLI1 transcription factor activity in Pi depleted conditions. The sequence is that of SPX domain-containing protein 1 from Oryza sativa subsp. indica (Rice).